Reading from the N-terminus, the 85-residue chain is Actobindin homolog (85 aa).

Residues 35 to 52 form the WH2 domain; it reads DRNELLSGIKEGKELKKA.

In terms of biological role, is able to bind two actin monomers at high concentrations of G-actin. The polypeptide is Actobindin homolog (Entamoeba histolytica).